Reading from the N-terminus, the 107-residue chain is Ribonuclease P protein component 4 (107 aa).

Cysteine 66, cysteine 69, cysteine 92, and cysteine 95 together coordinate Zn(2+).

The protein belongs to the eukaryotic/archaeal RNase P protein component 4 family. In terms of assembly, consists of a catalytic RNA component and at least 4-5 protein subunits. Zn(2+) serves as cofactor.

The protein resides in the cytoplasm. It catalyses the reaction Endonucleolytic cleavage of RNA, removing 5'-extranucleotides from tRNA precursor.. Its function is as follows. Part of ribonuclease P, a protein complex that generates mature tRNA molecules by cleaving their 5'-ends. The protein is Ribonuclease P protein component 4 of Methanosarcina barkeri (strain Fusaro / DSM 804).